A 120-amino-acid chain; its full sequence is Ig heavy chain V region 36-65 (120 aa).

The 111-residue stretch at 1-111 (VQLQQSGAEL…GGSYYFDYWG (111 aa)) folds into the Ig-like domain.

The chain is Ig heavy chain V region 36-65 from Mus musculus (Mouse).